Here is a 92-residue protein sequence, read N- to C-terminus: RQC P-site tRNA stabilizing factor (92 aa).

In terms of domain architecture, S4 RNA-binding spans 5–65 (MRLDKYLKVS…GPKIVTAKIE (61 aa)).

The protein belongs to the RqcP family. In terms of assembly, associates with stalled 50S ribosomal subunits. Binds to RqcH, 23S rRNA and the P-site tRNA. Does not require RqcH for association with 50S subunits.

Its function is as follows. Key component of the ribosome quality control system (RQC), a ribosome-associated complex that mediates the extraction of incompletely synthesized nascent chains from stalled ribosomes and their subsequent degradation. RqcH recruits Ala-charged tRNA, and with RqcP directs the elongation of stalled nascent chains on 50S ribosomal subunits, leading to non-templated C-terminal alanine extensions (Ala tail). The Ala tail promotes nascent chain degradation. RqcP is associated with the translocation-like movement of the peptidyl-tRNA from the A-site into the P-site. This chain is RQC P-site tRNA stabilizing factor, found in Listeria monocytogenes serovar 1/2a (strain ATCC BAA-679 / EGD-e).